The following is a 232-amino-acid chain: Homeobox protein Rhox13 (232 aa).

The tract at residues 45-114 (QAAVASSHDS…EAAAPSVAAV (70 aa)) is disordered. The span at 68–105 (SDSESESDSESESDSSDSSDESDDDSSTSDEDTSDPEE) shows a compositional bias: acidic residues. The homeobox DNA-binding region spans 148–207 (RRGPPFHFAQWQVEEMESLFEETQYPDLLTRGELARTLNVPEVKVKVWFTNRRAKQRKIE).

This sequence belongs to the paired-like homeobox family.

It is found in the nucleus. Functionally, probable transcription factor. The protein is Homeobox protein Rhox13 of Mus musculus (Mouse).